Here is a 208-residue protein sequence, read N- to C-terminus: Ras-related protein Rab-6A (208 aa).

Residue serine 2 is modified to N-acetylserine. Serine 23, valine 24, glycine 25, lysine 26, threonine 27, serine 28, aspartate 39, asparagine 40, tyrosine 42, and threonine 45 together coordinate GTP. Position 27 (threonine 27) interacts with Mg(2+). Positions 32-50 match the Switch 1 motif; the sequence is RFMYDSFDNTYQATIGIDF. 2 residues coordinate Mg(2+): threonine 45 and aspartate 68. Residues 69-88 carry the Switch 2 motif; the sequence is TAGQERFRSLIPSYIRDSTV. Residue glycine 71 coordinates GTP. Tyrosine 82 is subject to O-AMP-tyrosine; by Legionella DrrA. GTP-binding residues include asparagine 126, lysine 127, aspartate 129, serine 156, alanine 157, and lysine 158. Serine 184 is modified (phosphoserine). S-geranylgeranyl cysteine attachment occurs at residues cysteine 206 and cysteine 208. At cysteine 208 the chain carries Cysteine methyl ester.

Belongs to the small GTPase superfamily. Rab family. In terms of assembly, interacts (GTP-bound) with DYNLRB1; the interaction is direct. Interacts with BICD1. Interacts with BICD2; the interaction is direct. Interacts (GTP-bound) with VPS13B. Interacts with BICD1. Interacts (GDP-bound) with DYNLRB1; the interaction is direct. Interacts (GTP-bound) with VPS13B. As to quaternary structure, interacts with BICDL1; leads to its accumulation in the pericentrosomal region. Interacts with SCYL1BP1. Interacts with VSP52. Interacts with RABGAP1. Interacts with GCC2 (via its GRIP domain). Interacts with RAB6IP1 (via its RUN 1 domain). Interacts with TMF1. Interacts with CIMAP3. Interacts (GTP-bound) with APBA1/MINT1 isoform 2, also called Mint1_826, but not with isoform 1. Interacts with RIC1; the interaction is direct with a preference for RAB6A-GDP. Interacts with RGP1; the interaction is direct with a preference for RAB6A-GDP. In terms of assembly, (Microbial infection) Interacts with human cytomegalovirus protein UL32. Mg(2+) serves as cofactor. Prenylated. In terms of tissue distribution, ubiquitous.

Its subcellular location is the golgi apparatus membrane. The protein localises to the cytoplasmic vesicle. It localises to the secretory vesicle. The protein resides in the acrosome membrane. The catalysed reaction is GTP + H2O = GDP + phosphate + H(+). With respect to regulation, regulated by guanine nucleotide exchange factors (GEFs) which promote the exchange of bound GDP for free GTP. Regulated by GTPase activating proteins (GAPs) which increase the GTP hydrolysis activity. Inhibited by GDP dissociation inhibitors (GDIs). Functionally, the small GTPases Rab are key regulators of intracellular membrane trafficking, from the formation of transport vesicles to their fusion with membranes. Rabs cycle between an inactive GDP-bound form and an active GTP-bound form that is able to recruit to membranes different sets of downstream effectors directly responsible for vesicle formation, movement, tethering and fusion. RAB6A acts as a regulator of COPI-independent retrograde transport from the Golgi apparatus towards the endoplasmic reticulum (ER). Has a low GTPase activity. Recruits VPS13B to the Golgi membrane. Plays a role in neuron projection development. In Homo sapiens (Human), this protein is Ras-related protein Rab-6A.